A 156-amino-acid polypeptide reads, in one-letter code: Small ribosomal subunit protein uS7 (156 aa).

This sequence belongs to the universal ribosomal protein uS7 family. As to quaternary structure, part of the 30S ribosomal subunit. Contacts proteins S9 and S11.

One of the primary rRNA binding proteins, it binds directly to 16S rRNA where it nucleates assembly of the head domain of the 30S subunit. Is located at the subunit interface close to the decoding center, probably blocks exit of the E-site tRNA. The sequence is that of Small ribosomal subunit protein uS7 from Hamiltonella defensa subsp. Acyrthosiphon pisum (strain 5AT).